The primary structure comprises 348 residues: Thioredoxin-related protein DsbJ (348 aa).

Positions 1–32 (MILLQNIKRCSLKQLKVLATLLLSLSLPTLEA) are cleaved as a signal peptide.

The protein localises to the periplasm. The sequence is that of Thioredoxin-related protein DsbJ (dsbJ) from Chlamydia pneumoniae (Chlamydophila pneumoniae).